The following is a 111-amino-acid chain: UPF0342 protein gbs1446 (111 aa).

Belongs to the UPF0342 family.

The polypeptide is UPF0342 protein gbs1446 (Streptococcus agalactiae serotype III (strain NEM316)).